The following is a 129-amino-acid chain: Large ribosomal subunit protein bL20 (129 aa).

It belongs to the bacterial ribosomal protein bL20 family.

Functionally, binds directly to 23S ribosomal RNA and is necessary for the in vitro assembly process of the 50S ribosomal subunit. It is not involved in the protein synthesizing functions of that subunit. The polypeptide is Large ribosomal subunit protein bL20 (Kineococcus radiotolerans (strain ATCC BAA-149 / DSM 14245 / SRS30216)).